Here is a 541-residue protein sequence, read N- to C-terminus: Protopine 6-monooxygenase (541 aa).

The chain crosses the membrane as a helical span at residues Leu-9 to Val-29. Cys-476 contributes to the heme binding site.

Belongs to the cytochrome P450 family. Heme serves as cofactor.

Its subcellular location is the endoplasmic reticulum membrane. The enzyme catalyses protopine + reduced [NADPH--hemoprotein reductase] + O2 = 6-hydroxyprotopine + oxidized [NADPH--hemoprotein reductase] + H2O + H(+). Its pathway is alkaloid biosynthesis. Catalyzes the conversion of protopine and allocryptopine to dihydrosanguinarine and dihydrochelerythrine, respectively, in the biosynthesis of isoquinoline alkaloid sanguinarine. In Papaver somniferum (Opium poppy), this protein is Protopine 6-monooxygenase (CYP82N3).